A 310-amino-acid polypeptide reads, in one-letter code: B3 domain-containing transcription factor NGA1 (310 aa).

The disordered stretch occupies residues 1–26 (MMTDLSLTRDEDEEEAKPLAEEEGAR). Residues 16-26 (AKPLAEEEGAR) are compositionally biased toward basic and acidic residues. A DNA-binding region (TF-B3) is located at residues 35-141 (FDKVVTPSDV…RLFIDWRRRP (107 aa)). The span at 251–268 (ESGMTNSTEEESSSSGGS) shows a compositional bias: low complexity. Residues 251 to 310 (ESGMTNSTEEESSSSGGSLPRGGGGGASSSSFFQLRLGSSSEDDHFTKKGKSSLSFDLDQ) are disordered.

Interacts with BRX. Interacts with BZIP30.

It is found in the nucleus. Regulates lateral organ growth. Functionally redundant with NGA2, NGA3 and NGA4. This Arabidopsis thaliana (Mouse-ear cress) protein is B3 domain-containing transcription factor NGA1 (NGA1).